A 207-amino-acid polypeptide reads, in one-letter code: Na(+)-translocating NADH-quinone reductase subunit D (207 aa).

A run of 6 helical transmembrane segments spans residues 20 to 40 (IALQ…LQTA), 41 to 61 (FVMA…ISMI), 69 to 89 (IRII…DQIL), 102 to 122 (VFVG…AFAM), 130 to 150 (FVDG…VAFL), and 177 to 197 (NGLF…IWAI).

This sequence belongs to the NqrDE/RnfAE family. Composed of six subunits; NqrA, NqrB, NqrC, NqrD, NqrE and NqrF.

It is found in the cell inner membrane. It carries out the reaction a ubiquinone + n Na(+)(in) + NADH + H(+) = a ubiquinol + n Na(+)(out) + NAD(+). NQR complex catalyzes the reduction of ubiquinone-1 to ubiquinol by two successive reactions, coupled with the transport of Na(+) ions from the cytoplasm to the periplasm. NqrA to NqrE are probably involved in the second step, the conversion of ubisemiquinone to ubiquinol. The protein is Na(+)-translocating NADH-quinone reductase subunit D of Haemophilus ducreyi (strain 35000HP / ATCC 700724).